The following is a 234-amino-acid chain: Leucyl/phenylalanyl-tRNA--protein transferase (234 aa).

Belongs to the L/F-transferase family.

It is found in the cytoplasm. It carries out the reaction N-terminal L-lysyl-[protein] + L-leucyl-tRNA(Leu) = N-terminal L-leucyl-L-lysyl-[protein] + tRNA(Leu) + H(+). It catalyses the reaction N-terminal L-arginyl-[protein] + L-leucyl-tRNA(Leu) = N-terminal L-leucyl-L-arginyl-[protein] + tRNA(Leu) + H(+). The enzyme catalyses L-phenylalanyl-tRNA(Phe) + an N-terminal L-alpha-aminoacyl-[protein] = an N-terminal L-phenylalanyl-L-alpha-aminoacyl-[protein] + tRNA(Phe). Functionally, functions in the N-end rule pathway of protein degradation where it conjugates Leu, Phe and, less efficiently, Met from aminoacyl-tRNAs to the N-termini of proteins containing an N-terminal arginine or lysine. The chain is Leucyl/phenylalanyl-tRNA--protein transferase from Dechloromonas aromatica (strain RCB).